Reading from the N-terminus, the 190-residue chain is ATP synthase subunit delta (190 aa).

It belongs to the ATPase delta chain family. In terms of assembly, F-type ATPases have 2 components, F(1) - the catalytic core - and F(0) - the membrane proton channel. F(1) has five subunits: alpha(3), beta(3), gamma(1), delta(1), epsilon(1). F(0) has three main subunits: a(1), b(2) and c(10-14). The alpha and beta chains form an alternating ring which encloses part of the gamma chain. F(1) is attached to F(0) by a central stalk formed by the gamma and epsilon chains, while a peripheral stalk is formed by the delta and b chains.

The protein localises to the cell inner membrane. Its function is as follows. F(1)F(0) ATP synthase produces ATP from ADP in the presence of a proton or sodium gradient. F-type ATPases consist of two structural domains, F(1) containing the extramembraneous catalytic core and F(0) containing the membrane proton channel, linked together by a central stalk and a peripheral stalk. During catalysis, ATP synthesis in the catalytic domain of F(1) is coupled via a rotary mechanism of the central stalk subunits to proton translocation. In terms of biological role, this protein is part of the stalk that links CF(0) to CF(1). It either transmits conformational changes from CF(0) to CF(1) or is implicated in proton conduction. The polypeptide is ATP synthase subunit delta (Methylobacterium nodulans (strain LMG 21967 / CNCM I-2342 / ORS 2060)).